Reading from the N-terminus, the 750-residue chain is 3-isopropylmalate dehydratase (750 aa).

[4Fe-4S] cluster contacts are provided by Cys353, Cys413, and Cys416. Residues 492–524 (KYDGSPEVFKSTQDTTPAVKPPQPASDSSSSGG) form a disordered region.

This sequence belongs to the aconitase/IPM isomerase family. In terms of assembly, monomer. [4Fe-4S] cluster is required as a cofactor.

It carries out the reaction (2R,3S)-3-isopropylmalate = (2S)-2-isopropylmalate. It functions in the pathway amino-acid biosynthesis; L-leucine biosynthesis; L-leucine from 3-methyl-2-oxobutanoate: step 2/4. Catalyzes the isomerization between 2-isopropylmalate and 3-isopropylmalate, via the formation of 2-isopropylmaleate. This is 3-isopropylmalate dehydratase (LEU1) from Rhizopus niveus.